Here is a 150-residue protein sequence, read N- to C-terminus: MQIILLEKIGGLGNLGDIVTVKNGYARNFLIPAGKAKRATEANMKEFEARRAELEAKQAEILADARARQEKLDGQTVTVAQKAGVDGRLFGSVTNADIAAAIVAAGIEAVKANVRLPNGPLKAVGEYEVEVALHTDAVAKITVAVIAAAE.

Belongs to the bacterial ribosomal protein bL9 family.

Functionally, binds to the 23S rRNA. This Neisseria gonorrhoeae (strain ATCC 700825 / FA 1090) protein is Large ribosomal subunit protein bL9.